The chain runs to 444 residues: N-succinylarginine dihydrolase (444 aa).

Substrate contacts are provided by residues 19 to 28 (SGLSVGNIAS), Asn110, and 137 to 138 (HR). Residue Glu174 is part of the active site. A substrate-binding site is contributed by Arg214. His250 is an active-site residue. Substrate contacts are provided by Asp252 and Asn362. Cys368 (nucleophile) is an active-site residue.

Belongs to the succinylarginine dihydrolase family. As to quaternary structure, homodimer.

It catalyses the reaction N(2)-succinyl-L-arginine + 2 H2O + 2 H(+) = N(2)-succinyl-L-ornithine + 2 NH4(+) + CO2. The protein operates within amino-acid degradation; L-arginine degradation via AST pathway; L-glutamate and succinate from L-arginine: step 2/5. In terms of biological role, catalyzes the hydrolysis of N(2)-succinylarginine into N(2)-succinylornithine, ammonia and CO(2). This chain is N-succinylarginine dihydrolase, found in Aliivibrio fischeri (strain MJ11) (Vibrio fischeri).